Here is a 184-residue protein sequence, read N- to C-terminus: MSAVTKRSGSYGRTLGVGAVLVLVLATLAVVNVYTNLAPEMSGSQQSMLLSGLVSILLIVAVALLFVATIIGRERTAAVETLAAQARQIEQGELDVDLATNRTDDVGDIYRALAVLRDSEQLDRQHGVSAEVVAQYCETAVEISNGNDDSRLEENVDDPQLAELAMRFNEILDQRKRDAEIDSR.

2 helical membrane-spanning segments follow: residues 14–34 (TLGVGAVLVLVLATLAVVNVY) and 52–72 (GLVSILLIVAVALLFVATIIG). In terms of domain architecture, HAMP spans 73 to 125 (RERTAAVETLAAQARQIEQGELDVDLATNRTDDVGDIYRALAVLRDSEQLDRQ).

It belongs to the methyl-accepting chemotaxis (MCP) protein family. As to quaternary structure, interacts with Xop2/SRM.

It localises to the membrane. Functionally, the HtrM-Xop2/SRM complex may interact with CheB or CheR and modulate their availability to Sop1 or Sop2. This chain is Probable sensory rhodopsin transducer (htrM), found in Haloarcula marismortui (strain ATCC 43049 / DSM 3752 / JCM 8966 / VKM B-1809) (Halobacterium marismortui).